We begin with the raw amino-acid sequence, 95 residues long: uncharacterized protein (95 aa).

Positions 14 to 50 form a coiled coil; it reads KMEQKLQEQLDGLLEKYTELLLGETNDELKEEVKQWI.

This is an uncharacterized protein from Bacillus subtilis (strain 168).